The following is a 560-amino-acid chain: Dihydroxy-acid dehydratase (560 aa).

Mg(2+) is bound at residue Asp-78. [2Fe-2S] cluster is bound at residue Cys-119. Mg(2+) is bound by residues Asp-120 and Lys-121. Residue Lys-121 is modified to N6-carboxylysine. Residue Cys-192 participates in [2Fe-2S] cluster binding. Glu-446 provides a ligand contact to Mg(2+). The Proton acceptor role is filled by Ser-472.

The protein belongs to the IlvD/Edd family. Homodimer. Requires [2Fe-2S] cluster as cofactor. Mg(2+) serves as cofactor.

The catalysed reaction is (2R)-2,3-dihydroxy-3-methylbutanoate = 3-methyl-2-oxobutanoate + H2O. It catalyses the reaction (2R,3R)-2,3-dihydroxy-3-methylpentanoate = (S)-3-methyl-2-oxopentanoate + H2O. Its pathway is amino-acid biosynthesis; L-isoleucine biosynthesis; L-isoleucine from 2-oxobutanoate: step 3/4. It functions in the pathway amino-acid biosynthesis; L-valine biosynthesis; L-valine from pyruvate: step 3/4. In terms of biological role, functions in the biosynthesis of branched-chain amino acids. Catalyzes the dehydration of (2R,3R)-2,3-dihydroxy-3-methylpentanoate (2,3-dihydroxy-3-methylvalerate) into 2-oxo-3-methylpentanoate (2-oxo-3-methylvalerate) and of (2R)-2,3-dihydroxy-3-methylbutanoate (2,3-dihydroxyisovalerate) into 2-oxo-3-methylbutanoate (2-oxoisovalerate), the penultimate precursor to L-isoleucine and L-valine, respectively. This Anaeromyxobacter dehalogenans (strain 2CP-1 / ATCC BAA-258) protein is Dihydroxy-acid dehydratase.